Reading from the N-terminus, the 499-residue chain is Lysosomal Pro-X carboxypeptidase (499 aa).

Residues 1-21 form the signal peptide; it reads MGRCSLLLLLLLIAFLTPGAA. Residues 22–47 constitute a propeptide that is removed on maturation; the sequence is NPVSPSLRAPSSLPWSTSFRSRPTIT. N103 is a glycosylation site (N-linked (GlcNAc...) asparagine). Catalysis depends on S181, which acts as the Charge relay system. An SKS domain region spans residues 196-337; it reads HLVVGALASS…QNIFQALNVY (142 aa). Cystine bridges form between C217-C375, C235-C313, C266-C346, and C367-C397. N234 is a glycosylation site (N-linked (GlcNAc...) asparagine). N-linked (GlcNAc...) asparagine glycans are attached at residues N339 and N348. N418 is a glycosylation site (N-linked (GlcNAc...) asparagine). Active-site charge relay system residues include D433 and H458.

Belongs to the peptidase S28 family. As to quaternary structure, homodimer.

It localises to the lysosome. It carries out the reaction Cleavage of a -Pro-|-Xaa bond to release a C-terminal amino acid.. Cleaves C-terminal amino acids linked to proline in peptides such as angiotensin II, III and des-Arg9-bradykinin. This cleavage occurs at acidic pH, but enzymatic activity is retained with some substrates at neutral pH. The chain is Lysosomal Pro-X carboxypeptidase (PRCP) from Bos taurus (Bovine).